A 569-amino-acid chain; its full sequence is Urease subunit alpha (569 aa).

Residues 131 to 569 enclose the Urease domain; sequence GGFDAHIHFI…LPLAQRYFMY (439 aa). Ni(2+) contacts are provided by histidine 136, histidine 138, and lysine 219. Lysine 219 is subject to N6-carboxylysine. Position 221 (histidine 221) interacts with substrate. Residues histidine 248 and histidine 274 each coordinate Ni(2+). The active-site Proton donor is histidine 322. Aspartate 362 lines the Ni(2+) pocket.

The protein belongs to the metallo-dependent hydrolases superfamily. Urease alpha subunit family. In terms of assembly, heterotrimer of UreA (gamma), UreB (beta) and UreC (alpha) subunits. Three heterotrimers associate to form the active enzyme. It depends on Ni cation as a cofactor. Post-translationally, carboxylation allows a single lysine to coordinate two nickel ions.

The protein resides in the cytoplasm. The enzyme catalyses urea + 2 H2O + H(+) = hydrogencarbonate + 2 NH4(+). The protein operates within nitrogen metabolism; urea degradation; CO(2) and NH(3) from urea (urease route): step 1/1. This is Urease subunit alpha from Jannaschia sp. (strain CCS1).